A 59-amino-acid polypeptide reads, in one-letter code: Large ribosomal subunit protein uL30 (59 aa).

The protein belongs to the universal ribosomal protein uL30 family. Part of the 50S ribosomal subunit.

The protein is Large ribosomal subunit protein uL30 of Bacillus subtilis (strain 168).